The primary structure comprises 362 residues: H-2 class I histocompatibility antigen, L-D alpha chain (362 aa).

The N-terminal stretch at 1 to 24 (MGAMAPRTLLLLLAAALAPTQTRA) is a signal peptide. The segment at 25-114 (GPHSMRYFET…LLGYYNQSAG (90 aa)) is alpha-1. The Extracellular segment spans residues 25–309 (GPHSMRYFET…PPPSTDSYMV (285 aa)). An N-linked (GlcNAc...) asparagine glycan is attached at N110. The alpha-2 stretch occupies residues 115 to 206 (GTHTLQWMYG…KNGNATLLRT (92 aa)). Residues C125 and C188 are joined by a disulfide bond. Residues N200 and N280 are each glycosylated (N-linked (GlcNAc...) asparagine). An alpha-3 region spans residues 207 to 298 (DSPKAHVTHH…GLPEPLTLRW (92 aa)). In terms of domain architecture, Ig-like C1-type spans 209 to 297 (PKAHVTHHPR…EGLPEPLTLR (89 aa)). C227 and C283 are oxidised to a cystine. Positions 299–309 (EPPPSTDSYMV) are connecting peptide. The helical transmembrane segment at 310 to 331 (IVAVLGVLGAMAIIGAVVAFVM) threads the bilayer. At 332 to 362 (KRRRNTGGKGGDYALAPGSQSSEMSLRDCKA) the chain is on the cytoplasmic side. The tract at residues 340 to 362 (KGGDYALAPGSQSSEMSLRDCKA) is disordered. Phosphoserine is present on residues S353 and S356.

Belongs to the MHC class I family. As to quaternary structure, heterodimer of an alpha chain and a beta chain (beta-2-microglobulin).

It localises to the membrane. Involved in the presentation of foreign antigens to the immune system. The polypeptide is H-2 class I histocompatibility antigen, L-D alpha chain (H2-L) (Mus musculus (Mouse)).